The chain runs to 259 residues: Phosphatidylglycerol--prolipoprotein diacylglyceryl transferase (259 aa).

The next 4 membrane-spanning stretches (helical) occupy residues 16–36 (LAIS…WFYA), 55–75 (FITY…VLLY), 92–112 (EGGM…YLFC), and 117–137 (INFL…LFLG). Position 138 (Arg-138) interacts with a 1,2-diacyl-sn-glycero-3-phospho-(1'-sn-glycerol). A run of 3 helical transmembrane segments spans residues 172-192 (QLYE…YATF), 201-221 (GLNS…IEIF), and 228-248 (IGFI…MLLL).

It belongs to the Lgt family.

It localises to the cell inner membrane. It catalyses the reaction L-cysteinyl-[prolipoprotein] + a 1,2-diacyl-sn-glycero-3-phospho-(1'-sn-glycerol) = an S-1,2-diacyl-sn-glyceryl-L-cysteinyl-[prolipoprotein] + sn-glycerol 1-phosphate + H(+). It functions in the pathway protein modification; lipoprotein biosynthesis (diacylglyceryl transfer). Catalyzes the transfer of the diacylglyceryl group from phosphatidylglycerol to the sulfhydryl group of the N-terminal cysteine of a prolipoprotein, the first step in the formation of mature lipoproteins. This Rickettsia rickettsii (strain Iowa) protein is Phosphatidylglycerol--prolipoprotein diacylglyceryl transferase.